The chain runs to 342 residues: Ferredoxin--NADP reductase (342 aa).

FAD-binding residues include cysteine 17, aspartate 36, glutamine 44, tyrosine 49, valine 89, phenylalanine 124, aspartate 289, and threonine 330.

Belongs to the ferredoxin--NADP reductase type 2 family. In terms of assembly, homodimer. Requires FAD as cofactor.

It carries out the reaction 2 reduced [2Fe-2S]-[ferredoxin] + NADP(+) + H(+) = 2 oxidized [2Fe-2S]-[ferredoxin] + NADPH. The sequence is that of Ferredoxin--NADP reductase from Rhodopseudomonas palustris (strain ATCC BAA-98 / CGA009).